Reading from the N-terminus, the 316-residue chain is Dof zinc finger protein DOF5.7 (316 aa).

The interval methionine 1–lysine 42 is disordered. Residues serine 21–lysine 42 show a composition bias toward polar residues. The Dof-type zinc finger occupies leucine 41–lysine 95. Cysteine 43, cysteine 46, cysteine 68, and cysteine 71 together coordinate Zn(2+). Disordered regions lie at residues lysine 92–serine 111 and asparagine 257–glycine 294. The span at serine 101–serine 111 shows a compositional bias: low complexity. The span at asparagine 257–asparagine 291 shows a compositional bias: polar residues.

Its subcellular location is the nucleus. Transcription factor that binds specifically to a 5'-AA[AG]G-3' consensus core sequence. The protein is Dof zinc finger protein DOF5.7 (DOF5.7) of Arabidopsis thaliana (Mouse-ear cress).